A 395-amino-acid polypeptide reads, in one-letter code: Imidazolonepropionase (395 aa).

The Fe(3+) site is built by H63 and H65. Zn(2+) is bound by residues H63 and H65. 4-imidazolone-5-propanoate contacts are provided by R72, Y135, and H168. Y135 is an N-formimidoyl-L-glutamate binding site. A Fe(3+)-binding site is contributed by H233. A Zn(2+)-binding site is contributed by H233. Q236 contacts 4-imidazolone-5-propanoate. D308 lines the Fe(3+) pocket. D308 is a Zn(2+) binding site. Residues N310 and G312 each contribute to the N-formimidoyl-L-glutamate site. A 4-imidazolone-5-propanoate-binding site is contributed by T313.

The protein belongs to the metallo-dependent hydrolases superfamily. HutI family. The cofactor is Zn(2+). It depends on Fe(3+) as a cofactor.

It localises to the cytoplasm. The enzyme catalyses 4-imidazolone-5-propanoate + H2O = N-formimidoyl-L-glutamate. The protein operates within amino-acid degradation; L-histidine degradation into L-glutamate; N-formimidoyl-L-glutamate from L-histidine: step 3/3. Catalyzes the hydrolytic cleavage of the carbon-nitrogen bond in imidazolone-5-propanoate to yield N-formimidoyl-L-glutamate. It is the third step in the universal histidine degradation pathway. The protein is Imidazolonepropionase of Cereibacter sphaeroides (strain ATCC 17029 / ATH 2.4.9) (Rhodobacter sphaeroides).